The chain runs to 317 residues: Transcription factor EC (317 aa).

The necessary for transcriptional transactivation stretch occupies residues 1–90 (MTLDHRLFSQ…GLMNASCPSI (90 aa)). The bHLH domain maps to 110–163 (QKKDNHNLIERRRRYNINYRIKELGTLIPKSNDPDIRWNKGTILKASVDYIKWL). The segment at 242-317 (TSPEFYEQAV…SLSSEDGDEL (76 aa)) is necessary for transcriptional transactivation.

It belongs to the MiT/TFE family. Homodimer. Forms heterodimers with TFE3. Forms heterodimers with MITF. Interacts with MITF. In terms of tissue distribution, expressed in kidney, spleen, lung, liver, testis and muscle.

The protein localises to the nucleus. Transcriptional regulator that acts as a repressor or an activator. Acts as a transcriptional repressor on minimal promoter containing mu E3 enhancer sequence. Binds to mu E3 DNA sequence of the immunoglobulin heavy-chain gene enhancer. Acts as a transcriptional transactivator on the proximal promoter region of the tartrate-resistant acid phosphatase (TRAP) E-box containing promoter. Collaborates with MITF in target gene activation. Acts as a transcriptional repressor on minimal promoter containing mu E3 enhancer sequence. Binds to mu E3 DNA sequence of the immunoglobulin heavy-chain gene enhancer. Binds DNA in a homo- or heterodimeric form. This is Transcription factor EC (Tfec) from Rattus norvegicus (Rat).